Here is a 613-residue protein sequence, read N- to C-terminus: DNA repair and telomere maintenance protein nbs1 (613 aa).

One can recognise an FHA domain in the interval 23-86 (YIVGRNVSDD…FGTKVNEKVV (64 aa)). 2 consecutive BRCT domains span residues 107–186 (FTIN…YLST) and 228–302 (GFSC…KIII). S355 carries the phosphoserine modification. Disordered regions lie at residues 381–428 (KEPE…GQGK) and 546–613 (TEVF…KFHF). Positions 387–399 (LSNQSNNGSAQNK) are enriched in polar residues. Basic and acidic residues predominate over residues 400 to 409 (KSGDNSEKTK). A compositionally biased stretch (low complexity) spans 574 to 592 (SSDKSGKSSISKKSSNSFK). The short motif at 611–613 (FHF) is the FxF/Y motif element.

This sequence belongs to the Nibrin family. Component of the MRN complex composed of two heterodimers rad32 and rad50 associated with a single nbs1. Interacts with (phosphorylated) ctp1/CtIP. Interacts (via FxF/Y motif) with tel1/atm.

It is found in the nucleus. Its subcellular location is the chromosome. The protein localises to the telomere. Component of the MRN complex, which plays a central role in double-strand break (DSB) repair, DNA recombination, maintenance of telomere integrity and meiosis. The MRN complex is involved in the repair of DNA double-strand breaks (DSBs) via homologous recombination (HR), an error-free mechanism which primarily occurs during S and G2 phases. The complex (1) mediates the end resection of damaged DNA, which generates proper single-stranded DNA, a key initial steps in HR, and is (2) required for the recruitment of other repair factors and efficient activation of tel1/atm upon DNA damage. The MRN complex possesses single-strand endonuclease activity and double-strand-specific 3'-5' exonuclease activity, which are provided by MRE11, to initiate end resection, which is required for single-strand invasion and recombination. Within the MRN complex, nbs1 acts as a protein-protein adapter, which specifically recognizes and binds phosphorylated proteins, promoting their recruitment to DNA damage sites. Recruits rad32 and rad50 components of the MRN complex to DSBs in response to DNA damage. Promotes the recruitment of tel1/atm to the DNA damage sites, activating tel1/atm function. Mediates the recruitment of phosphorylated ctp1/CtIP to DSBs, leading to cooperation between the MRN complex and ctp1/CtIP to initiate end resection. The chain is DNA repair and telomere maintenance protein nbs1 from Schizosaccharomyces pombe (strain 972 / ATCC 24843) (Fission yeast).